A 156-amino-acid chain; its full sequence is Endogenous retrovirus group K member 24 Pro protein (156 aa).

The Peptidase A2 domain occupies 21 to 96 (FEGLVDTGAD…IPLNLWGRDL (76 aa)). Aspartate 26 is an active-site residue. The 46-residue stretch at 111–156 (YSPTSQKIMTKMGYIPGKGLGKNEDGIKIPFEAKINQKREGIGYPF) folds into the G-patch domain.

Belongs to the peptidase A2 family. HERV class-II K(HML-2) subfamily. As to quaternary structure, active as a homodimer. In terms of processing, autoproteolytically processed at the N-terminus. Expected C-terminal autoprocessing not detected. The sequence shown is that of the processed Pro protein.

It carries out the reaction Processing at the authentic HIV-1 PR recognition site and release of the mature p17 matrix and the p24 capsid protein, as a result of the cleavage of the -SQNY-|-PIVQ- cleavage site.. Functionally, retroviral proteases have roles in processing of the primary translation products and the maturation of the viral particle. Endogenous Pro proteins may have kept, lost or modified their original function during evolution. This endogenous protein has retained most of the characteristics of retroviral proteases. The sequence is that of Endogenous retrovirus group K member 24 Pro protein (ERVK-24) from Homo sapiens (Human).